The following is a 176-amino-acid chain: Large ribosomal subunit protein uL16 (176 aa).

This sequence belongs to the universal ribosomal protein uL16 family.

The polypeptide is Large ribosomal subunit protein uL16 (Thermoplasma acidophilum (strain ATCC 25905 / DSM 1728 / JCM 9062 / NBRC 15155 / AMRC-C165)).